The following is a 104-amino-acid chain: Large ribosomal subunit protein bL21 (104 aa).

Belongs to the bacterial ribosomal protein bL21 family. In terms of assembly, part of the 50S ribosomal subunit. Contacts protein L20.

In terms of biological role, this protein binds to 23S rRNA in the presence of protein L20. This Helicobacter pylori (strain G27) protein is Large ribosomal subunit protein bL21.